A 690-amino-acid chain; its full sequence is Choline transporter-like 1 (690 aa).

Residues 23 to 43 form a helical membrane-spanning segment; the sequence is IFWLVLYVVFWIALIVIAVFS. A glycan (N-linked (GlcNAc...) asparagine) is linked at Asn134. The next 4 membrane-spanning stretches (helical) occupy residues 203–223, 237–259, 282–302, and 334–354; these read LYKAWPTIVLICALSLVFSIV, WLICIIVVVASVGITGVLWWSYY, ATIYVLAIAATCIMIILLVVI, and LLAFLALSVFLAFWVVVVVCL. Asn391 is a glycosylation site (N-linked (GlcNAc...) asparagine). 4 helical membrane passes run 415-435, 464-484, 565-585, and 594-614; these read IYIIGLIWTSEFIFACQQLAI, LGSVAKGSLIITIFKIPRLIL, FVLFLGKLAVASICGLISILL, and FYMAPVIIITVFAFFIAHIIL.

It belongs to the CTL (choline transporter-like) family.

The protein localises to the membrane. The protein is Choline transporter-like 1 of Anopheles gambiae (African malaria mosquito).